Consider the following 515-residue polypeptide: NADH-ubiquinone oxidoreductase chain 2 (515 aa).

A run of 5 helical transmembrane segments spans residues 63-83 (WPIG…NSGS), 250-270 (VFIY…CSIA), 299-319 (FVLV…GLFI), 356-376 (AITF…AGFC), and 379-399 (FYLF…VGVV).

This sequence belongs to the complex I subunit 2 family.

The protein localises to the mitochondrion inner membrane. The enzyme catalyses a ubiquinone + NADH + 5 H(+)(in) = a ubiquinol + NAD(+) + 4 H(+)(out). In terms of biological role, core subunit of the mitochondrial membrane respiratory chain NADH dehydrogenase (Complex I) that is believed to belong to the minimal assembly required for catalysis. Complex I functions in the transfer of electrons from NADH to the respiratory chain. The immediate electron acceptor for the enzyme is believed to be ubiquinone. The protein is NADH-ubiquinone oxidoreductase chain 2 (ND2) of Beta vulgaris (Sugar beet).